Consider the following 107-residue polypeptide: Integration host factor subunit beta (107 aa).

The span at 82-101 (PGKELRERVDRRAGEPLKAE) shows a compositional bias: basic and acidic residues. The disordered stretch occupies residues 82–107 (PGKELRERVDRRAGEPLKAEDPDDDL).

The protein belongs to the bacterial histone-like protein family. Heterodimer of an alpha and a beta chain.

In terms of biological role, this protein is one of the two subunits of integration host factor, a specific DNA-binding protein that functions in genetic recombination as well as in transcriptional and translational control. This is Integration host factor subunit beta from Paraburkholderia xenovorans (strain LB400).